The following is a 211-amino-acid chain: Large ribosomal subunit protein uL4 (211 aa).

The segment covering 41–52 has biased composition (polar residues); the sequence is QTNARQGTASTK. Positions 41–78 are disordered; sequence QTNARQGTASTKTRAEVRGGGRKPWRQKGTGRARAGSI. Basic residues predominate over residues 60–71; it reads GGRKPWRQKGTG.

This sequence belongs to the universal ribosomal protein uL4 family. Part of the 50S ribosomal subunit.

In terms of biological role, one of the primary rRNA binding proteins, this protein initially binds near the 5'-end of the 23S rRNA. It is important during the early stages of 50S assembly. It makes multiple contacts with different domains of the 23S rRNA in the assembled 50S subunit and ribosome. Its function is as follows. Forms part of the polypeptide exit tunnel. The protein is Large ribosomal subunit protein uL4 of Rippkaea orientalis (strain PCC 8801 / RF-1) (Cyanothece sp. (strain PCC 8801)).